The chain runs to 350 residues: Ion-translocating oxidoreductase complex subunit D (350 aa).

5 helical membrane passes run 19–39 (LMLL…WFFG), 41–61 (GTLI…ALVL), 67–87 (PVKP…IGLS), 88–108 (LPPL…IIIA), and 122–142 (PAMV…TSWL). An FMN phosphoryl threonine modification is found at T186. The next 4 helical transmembrane spans lie at 213–233 (WGGI…LFLL), 242–262 (IPGA…LMTP), 264–284 (ATAT…AFFI), and 299–316 (LVYG…RRFG).

The protein belongs to the NqrB/RnfD family. The complex is composed of six subunits: RnfA, RnfB, RnfC, RnfD, RnfE and RnfG. Requires FMN as cofactor.

The protein resides in the cell inner membrane. Functionally, part of a membrane-bound complex that couples electron transfer with translocation of ions across the membrane. The chain is Ion-translocating oxidoreductase complex subunit D from Aeromonas hydrophila subsp. hydrophila (strain ATCC 7966 / DSM 30187 / BCRC 13018 / CCUG 14551 / JCM 1027 / KCTC 2358 / NCIMB 9240 / NCTC 8049).